Here is a 387-residue protein sequence, read N- to C-terminus: Anhydro-N-acetylmuramic acid kinase (387 aa).

Residue 17–24 (GTSMDGVD) coordinates ATP.

The protein belongs to the anhydro-N-acetylmuramic acid kinase family.

The catalysed reaction is 1,6-anhydro-N-acetyl-beta-muramate + ATP + H2O = N-acetyl-D-muramate 6-phosphate + ADP + H(+). It participates in amino-sugar metabolism; 1,6-anhydro-N-acetylmuramate degradation. Its pathway is cell wall biogenesis; peptidoglycan recycling. Its function is as follows. Catalyzes the specific phosphorylation of 1,6-anhydro-N-acetylmuramic acid (anhMurNAc) with the simultaneous cleavage of the 1,6-anhydro ring, generating MurNAc-6-P. Is required for the utilization of anhMurNAc either imported from the medium or derived from its own cell wall murein, and thus plays a role in cell wall recycling. The protein is Anhydro-N-acetylmuramic acid kinase of Burkholderia pseudomallei (strain 1710b).